A 319-amino-acid polypeptide reads, in one-letter code: 33 kDa chaperonin (319 aa).

2 disulfide bridges follow: Cys-239-Cys-241 and Cys-272-Cys-275. Positions 300–319 (EVSEEMKKAEEKEKEEKNKK) are disordered.

The protein belongs to the HSP33 family. Post-translationally, under oxidizing conditions two disulfide bonds are formed involving the reactive cysteines. Under reducing conditions zinc is bound to the reactive cysteines and the protein is inactive.

The protein resides in the cytoplasm. Functionally, redox regulated molecular chaperone. Protects both thermally unfolding and oxidatively damaged proteins from irreversible aggregation. Plays an important role in the bacterial defense system toward oxidative stress. The polypeptide is 33 kDa chaperonin (Clostridium perfringens (strain ATCC 13124 / DSM 756 / JCM 1290 / NCIMB 6125 / NCTC 8237 / Type A)).